Consider the following 98-residue polypeptide: NADH-ubiquinone oxidoreductase chain 4L (98 aa).

3 helical membrane passes run 1-21 (MPVI…GLLI), 29-49 (SLLC…TLAL), and 61-81 (IILL…LVMV).

It belongs to the complex I subunit 4L family. As to quaternary structure, core subunit of respiratory chain NADH dehydrogenase (Complex I) which is composed of 45 different subunits.

Its subcellular location is the mitochondrion inner membrane. It carries out the reaction a ubiquinone + NADH + 5 H(+)(in) = a ubiquinol + NAD(+) + 4 H(+)(out). Its function is as follows. Core subunit of the mitochondrial membrane respiratory chain NADH dehydrogenase (Complex I) which catalyzes electron transfer from NADH through the respiratory chain, using ubiquinone as an electron acceptor. Part of the enzyme membrane arm which is embedded in the lipid bilayer and involved in proton translocation. In Echinops telfairi (Lesser hedgehog tenrec), this protein is NADH-ubiquinone oxidoreductase chain 4L (MT-ND4L).